The primary structure comprises 310 residues: NADH-cytochrome b5 reductase 1 (310 aa).

Residues 30 to 50 form a helical membrane-spanning segment; sequence WVPFAVALAAGFVAWKLSVGG. The 106-residue stretch at 61–166 folds into the FAD-binding FR-type domain; the sequence is NEFQNFVLKE…RGPKGAMVYT (106 aa). Residues 146-160 and 172-209 contribute to the FAD site; these read TTLK…RGPK and HIGM…QVDL.

This sequence belongs to the flavoprotein pyridine nucleotide cytochrome reductase family. As to quaternary structure, monomer. Component of the 2-(3-amino-3-carboxypropyl)histidine synthase complex composed of dph1, dph2, dph3 and a NADH-dependent reductase, predominantly cbr1. It depends on FAD as a cofactor.

It localises to the mitochondrion outer membrane. The enzyme catalyses 2 Fe(III)-[cytochrome b5] + NADH = 2 Fe(II)-[cytochrome b5] + NAD(+) + H(+). The catalysed reaction is 2 Fe(3+)-[Dph3] + NADH = 2 Fe(2+)-[Dph3] + NAD(+) + H(+). Its pathway is protein modification; peptidyl-diphthamide biosynthesis. In terms of biological role, NADH-dependent reductase for dph3 and cytochrome b5. Required for the first step of diphthamide biosynthesis, a post-translational modification of histidine which occurs in elongation factor 2. Dph1 and dph2 transfer a 3-amino-3-carboxypropyl (ACP) group from S-adenosyl-L-methionine (SAM) to a histidine residue, the reaction is assisted by a reduction system comprising dph3 and a NADH-dependent reductase, predominantly cbr1. By reducing dph3, also involved in the formation of the tRNA wobble base modification mcm5s 2U (5-methoxycarbonylmethyl-2-thiouridine), mediated by the elongator complex. The cytochrome b5/NADH cytochrome b5 reductase electron transfer system supports the catalytic activity of several sterol biosynthetic enzymes. The protein is NADH-cytochrome b5 reductase 1 (cbr1) of Emericella nidulans (strain FGSC A4 / ATCC 38163 / CBS 112.46 / NRRL 194 / M139) (Aspergillus nidulans).